Consider the following 745-residue polypeptide: Heterogeneous nuclear ribonucleoprotein U-like protein 2 (745 aa).

In terms of domain architecture, SAP spans 3–37 (VKRLKVTELRSELQRRGLDSRGLKMDLAQRLQEAL). Disordered regions lie at residues 44-239 (DEAG…DEEE) and 625-664 (EEARKLLPPSEKRTNRRNNRNKRNRQNRSRGQGYVGGQRR). Residues 73 to 97 (GDEEEEDDDEEEDEEALLEDEDEEP) are compositionally biased toward acidic residues. Positions 142 to 161 (GEEHDNGKGEEDGPEERSGD) are enriched in basic and acidic residues. A Phosphoserine modification is found at serine 159. Position 163 is a phosphothreonine (threonine 163). Residues serine 166, serine 183, serine 186, serine 224, and serine 226 each carry the phosphoserine modification. A compositionally biased stretch (basic and acidic residues) spans 183–221 (SEKSKPAGSDGERRGVKRQRDEKDEHGRAYYEFREEAYH). The B30.2/SPRY domain maps to 224-417 (SKSPPPPEEE…VELNFGQKEE (194 aa)). Residues 230–239 (PEEEAKDEEE) show a composition bias toward acidic residues. Positions 625–637 (EEARKLLPPSEKR) are enriched in basic and acidic residues. A compositionally biased stretch (basic residues) spans 638–652 (TNRRNNRNKRNRQNR). 4 positions are modified to omega-N-methylarginine: arginine 654, arginine 682, arginine 736, and arginine 745.

As to quaternary structure, binds to MLF1 and retains it in the nucleus.

The protein localises to the nucleus. The polypeptide is Heterogeneous nuclear ribonucleoprotein U-like protein 2 (Hnrnpul2) (Mus musculus (Mouse)).